The sequence spans 105 residues: Small ribosomal subunit protein uS10 (105 aa).

It belongs to the universal ribosomal protein uS10 family. Part of the 30S ribosomal subunit.

Functionally, involved in the binding of tRNA to the ribosomes. The chain is Small ribosomal subunit protein uS10 from Solidesulfovibrio magneticus (strain ATCC 700980 / DSM 13731 / RS-1) (Desulfovibrio magneticus).